A 212-amino-acid polypeptide reads, in one-letter code: Protein G1-like7 (212 aa).

Over residues 1–22 (MDPSGPGPSSAAAGGAPAVAAA) the composition is skewed to low complexity. Disordered stretches follow at residues 1–34 (MDPSGPGPSSAAAGGAPAVAAAPQPPAQLSRYES) and 148–212 (KARG…PSAS). The region spanning 31–158 (RYESQKRRDW…ARGIPYEKKK (128 aa)) is the ALOG domain. The short motif at 156-160 (KKKRK) is the Nuclear localization signal element. A compositionally biased stretch (low complexity) spans 167–182 (PAGVEPSGSSSAAAAA). Residues 183-194 (AGGGDAGSGGGA) show a composition bias toward gly residues. Residues 195–212 (AATTTAQPGGSGTAPSAS) show a composition bias toward low complexity.

This sequence belongs to the plant homeotic and developmental regulators ALOG protein family.

The protein localises to the nucleus. Its function is as follows. Probable transcription regulator that acts as a developmental regulator by promoting cell growth in response to light. The chain is Protein G1-like7 (G1L7) from Oryza sativa subsp. japonica (Rice).